Reading from the N-terminus, the 314-residue chain is MKKKIAEYEVGEQVDIFLLIKTATKGIASNGKPFLTVILQDPSGDIEAKLWDVSPEVEKQYVAETIVKVAGDILNYKGRIQLRVKQIRVANENEVTDISDFVEKAPVKKEDMVEKITQYIFEMRNPNIQRLTRHLLNKHQNEFLDYPAATKNHHEFVSGLAYHVVSMLDLAKAISNLYPSLDKDLLYAGVILHDLGKVIELSGPISTTYTLEGNLLGHISIMVNEIGKAADELQIDAEEVLILQHIVLSHHGKAEWGSPKPPLVKEAEILHYIDNLDAKMNMMDRALGRTKPGEYTERVFALDNRSFYKPSFHN.

The HD domain maps to 163-279 (HVVSMLDLAK…LHYIDNLDAK (117 aa)).

Belongs to the YhaM family.

Functionally, shows a 3'-5' exoribonuclease activity. The protein is 3'-5' exoribonuclease YhaM of Bacillus thuringiensis (strain Al Hakam).